We begin with the raw amino-acid sequence, 341 residues long: DNA fragmentation factor subunit beta (341 aa).

A CIDE-N domain is found at 7–83; the sequence is KPKTFKLRSL…LLTAGQTWQG (77 aa).

Heterodimer of DFFA and DFFB. Interacts with H1-1.

Its subcellular location is the cytoplasm. The protein localises to the nucleus. With respect to regulation, inhibited by DFFA (DFF45). Interacts with HIST1H1A. Functionally, nuclease that induces DNA fragmentation and chromatin condensation during apoptosis. Degrades naked DNA and induces apoptotic morphology. This is DNA fragmentation factor subunit beta (DFFB) from Bos taurus (Bovine).